A 312-amino-acid chain; its full sequence is DNA primase small subunit PriS (312 aa).

Residues Asp-88, Asp-90, and Asp-215 contribute to the active site.

Belongs to the eukaryotic-type primase small subunit family. In terms of assembly, heterodimer of a small subunit (PriS) and a large subunit (PriL). Mg(2+) is required as a cofactor. The cofactor is Mn(2+).

Functionally, catalytic subunit of DNA primase, an RNA polymerase that catalyzes the synthesis of short RNA molecules used as primers for DNA polymerase during DNA replication. The small subunit contains the primase catalytic core and has DNA synthesis activity on its own. Binding to the large subunit stabilizes and modulates the activity, increasing the rate of DNA synthesis while decreasing the length of the DNA fragments, and conferring RNA synthesis capability. The DNA polymerase activity may enable DNA primase to also catalyze primer extension after primer synthesis. May also play a role in DNA repair. The protein is DNA primase small subunit PriS of Pyrobaculum islandicum (strain DSM 4184 / JCM 9189 / GEO3).